A 785-amino-acid chain; its full sequence is Probable splicing factor 3A subunit 1 (785 aa).

An N-acetylmethionine modification is found at Met1. The disordered stretch occupies residues 1–42 (MFSSMQILPLEAPPTDGKLGPLPPSQLTDQEVEERELQAEQN). The stretch at 71–113 (IVEKTAQFVSKNGLEFEKRIIVSNEKNAKFNFLKSSDPYHAFY) is one SURP motif 1 repeat. The interval 124–175 (NKDGAQGTDDSDGTTDPQLDTGAADESEAGDTQPDLQAQFRIPSKPLEAPEP) is disordered. The stretch at 193-235 (IIKLTAQFVARNGKSFLTGLSNRENNNPQFHFMKPTHSMFTFF) is one SURP motif 2 repeat. 2 disordered regions span residues 522–554 (NANGEEQGDGVYGDPNSFPGPAALPPPRPGVPI) and 639–713 (RPYG…PNEN). Composition is skewed to pro residues over residues 543-554 (AALPPPRPGVPI) and 653-674 (QPPPMPGMAPPPPPEEAPPPLP). Basic and acidic residues predominate over residues 677–686 (PEAKRQKFDE). Residues 707 to 782 (VSKPNENDGQ…LTLSLRERGG (76 aa)) enclose the Ubiquitin-like domain.

As to quaternary structure, component of splicing factor SF3A which is composed of three subunits.

Its subcellular location is the nucleus. The chain is Probable splicing factor 3A subunit 1 from Arabidopsis thaliana (Mouse-ear cress).